Reading from the N-terminus, the 950-residue chain is Valine--tRNA ligase (950 aa).

The short motif at 40 to 50 (PNVTGSLHMGH) is the 'HIGH' region element. A 'KMSKS' region motif is present at residues 551 to 555 (KMSKS). Lys-554 is a binding site for ATP. Positions 881–950 (LIDKSAELGR…AEQRQKIAAL (70 aa)) form a coiled coil.

Belongs to the class-I aminoacyl-tRNA synthetase family. ValS type 1 subfamily. In terms of assembly, monomer.

The protein resides in the cytoplasm. The catalysed reaction is tRNA(Val) + L-valine + ATP = L-valyl-tRNA(Val) + AMP + diphosphate. In terms of biological role, catalyzes the attachment of valine to tRNA(Val). As ValRS can inadvertently accommodate and process structurally similar amino acids such as threonine, to avoid such errors, it has a 'posttransfer' editing activity that hydrolyzes mischarged Thr-tRNA(Val) in a tRNA-dependent manner. This chain is Valine--tRNA ligase, found in Pseudomonas aeruginosa (strain ATCC 15692 / DSM 22644 / CIP 104116 / JCM 14847 / LMG 12228 / 1C / PRS 101 / PAO1).